Reading from the N-terminus, the 291-residue chain is Ribosomal RNA small subunit methyltransferase A (291 aa).

S-adenosyl-L-methionine-binding residues include His-21, Leu-23, Gly-48, Glu-70, Asp-95, and Asn-115.

Belongs to the class I-like SAM-binding methyltransferase superfamily. rRNA adenine N(6)-methyltransferase family. RsmA subfamily.

It is found in the cytoplasm. It catalyses the reaction adenosine(1518)/adenosine(1519) in 16S rRNA + 4 S-adenosyl-L-methionine = N(6)-dimethyladenosine(1518)/N(6)-dimethyladenosine(1519) in 16S rRNA + 4 S-adenosyl-L-homocysteine + 4 H(+). In terms of biological role, specifically dimethylates two adjacent adenosines (A1518 and A1519) in the loop of a conserved hairpin near the 3'-end of 16S rRNA in the 30S particle. May play a critical role in biogenesis of 30S subunits. The sequence is that of Ribosomal RNA small subunit methyltransferase A from Prochlorococcus marinus (strain NATL2A).